A 323-amino-acid polypeptide reads, in one-letter code: MFTTVRPEQKPINPFIPYDLFTAIDELKRELNAVILAHYYQDPDIQDIADYIGDSLGLSQQAAATSADVIVFAGVHFMAETAKILNPDKLVLLPDLNAGCSLADSCPPQEFAQFKAKYPDHLVVSYINCSAEIKAMSDIICTSSNAVKIVNQIPEDQPIIFAPDRNLGRYVMEQTGRDLVLWQGSCIVHETFSEKKIIQLLMEYPKAEFIAHPECEPSVLRHASYIGSTTALLTYSQKSGSDTFIVATEPGIIHQMQKEAPNKRFIPAPAMNNCLCNECPHMRLNTLEKLYLAMKNKSPEITLPEHIRVAALLPIERMLEMSK.

2 residues coordinate iminosuccinate: His-38 and Ser-55. Cys-100 is a binding site for [4Fe-4S] cluster. Iminosuccinate-binding positions include 126–128 (YIN) and Ser-143. A [4Fe-4S] cluster-binding site is contributed by Cys-186. Iminosuccinate-binding positions include 212 to 214 (HPE) and Thr-229. Cys-279 lines the [4Fe-4S] cluster pocket.

Belongs to the quinolinate synthase family. Type 2 subfamily. Requires [4Fe-4S] cluster as cofactor.

It is found in the cytoplasm. It carries out the reaction iminosuccinate + dihydroxyacetone phosphate = quinolinate + phosphate + 2 H2O + H(+). It participates in cofactor biosynthesis; NAD(+) biosynthesis; quinolinate from iminoaspartate: step 1/1. Its function is as follows. Catalyzes the condensation of iminoaspartate with dihydroxyacetone phosphate to form quinolinate. In Gloeothece citriformis (strain PCC 7424) (Cyanothece sp. (strain PCC 7424)), this protein is Quinolinate synthase.